A 309-amino-acid polypeptide reads, in one-letter code: tRNA-dihydrouridine(16) synthase (309 aa).

FMN is bound by residues 7–9 (PME) and Q68. C98 functions as the Proton donor in the catalytic mechanism. FMN-binding positions include R137, N198, and 220-221 (GC).

The protein belongs to the Dus family. DusC subfamily. It depends on FMN as a cofactor.

It catalyses the reaction 5,6-dihydrouridine(16) in tRNA + NADP(+) = uridine(16) in tRNA + NADPH + H(+). The enzyme catalyses 5,6-dihydrouridine(16) in tRNA + NAD(+) = uridine(16) in tRNA + NADH + H(+). Its function is as follows. Catalyzes the synthesis of 5,6-dihydrouridine (D), a modified base found in the D-loop of most tRNAs, via the reduction of the C5-C6 double bond in target uridines. Specifically modifies U16 in tRNAs. The sequence is that of tRNA-dihydrouridine(16) synthase from Azotobacter vinelandii.